Here is a 100-residue protein sequence, read N- to C-terminus: Urease subunit gamma (100 aa).

Belongs to the urease gamma subunit family. In terms of assembly, heterotrimer of UreA (gamma), UreB (beta) and UreC (alpha) subunits. Three heterotrimers associate to form the active enzyme.

The protein resides in the cytoplasm. It catalyses the reaction urea + 2 H2O + H(+) = hydrogencarbonate + 2 NH4(+). It participates in nitrogen metabolism; urea degradation; CO(2) and NH(3) from urea (urease route): step 1/1. The sequence is that of Urease subunit gamma from Prochlorococcus marinus (strain NATL1A).